The primary structure comprises 103 residues: U6 snRNA-associated Sm-like protein LSm7 (103 aa).

Position 2 is an N-acetylalanine (Ala2). One can recognise a Sm domain in the interval 10–90 (ESILDLSKYI…VVLICPQDGM (81 aa)).

The protein belongs to the snRNP Sm proteins family. Component of the precatalytic spliceosome (spliceosome B complex). Component of the U4/U6-U5 tri-snRNP complex, a building block of the precatalytic spliceosome (spliceosome B complex). The U4/U6-U5 tri-snRNP complex is composed of the U4, U6 and U5 snRNAs and at least PRPF3, PRPF4, PRPF6, PRPF8, PRPF31, SNRNP200, TXNL4A, SNRNP40, SNRPB, SNRPD1, SNRPD2, SNRPD3, SNRPE, SNRPF, SNRPG, DDX23, CD2BP2, PPIH, SNU13, EFTUD2, SART1 and USP39, plus LSM2, LSM3, LSM4, LSM5, LSM6, LSM7 and LSM8. LSM2, LSM3, LSM4, LSM5, LSM6, LSM7 and LSM8 form a heptameric, ring-shaped subcomplex (the LSM2-8 complex) that is part of the U4/U6-U5 tri-snRNP complex and the precatalytic spliceosome. Interacts with TACC1.

The protein resides in the nucleus. In terms of biological role, plays a role in pre-mRNA splicing as component of the U4/U6-U5 tri-snRNP complex that is involved in spliceosome assembly, and as component of the precatalytic spliceosome (spliceosome B complex). The heptameric LSM2-8 complex binds specifically to the 3'-terminal U-tract of U6 snRNA. This chain is U6 snRNA-associated Sm-like protein LSm7 (LSM7), found in Homo sapiens (Human).